Reading from the N-terminus, the 278-residue chain is Small ribosomal subunit protein uS2 (278 aa).

Residues 233 to 257 are disordered; it reads IDMEAAGEAPANKGKKKSVKARLDK.

It belongs to the universal ribosomal protein uS2 family.

This Bacteroides thetaiotaomicron (strain ATCC 29148 / DSM 2079 / JCM 5827 / CCUG 10774 / NCTC 10582 / VPI-5482 / E50) protein is Small ribosomal subunit protein uS2.